Consider the following 673-residue polypeptide: UvrABC system protein B (673 aa).

In terms of domain architecture, Helicase ATP-binding spans glutamate 26 to arginine 414. Position 39–46 (glycine 39–threonine 46) interacts with ATP. The short motif at tyrosine 92–valine 115 is the Beta-hairpin element. Residues glutamine 431–leucine 597 form the Helicase C-terminal domain. Residues glutamine 633–leucine 668 form the UVR domain.

The protein belongs to the UvrB family. As to quaternary structure, forms a heterotetramer with UvrA during the search for lesions. Interacts with UvrC in an incision complex.

The protein resides in the cytoplasm. Its function is as follows. The UvrABC repair system catalyzes the recognition and processing of DNA lesions. A damage recognition complex composed of 2 UvrA and 2 UvrB subunits scans DNA for abnormalities. Upon binding of the UvrA(2)B(2) complex to a putative damaged site, the DNA wraps around one UvrB monomer. DNA wrap is dependent on ATP binding by UvrB and probably causes local melting of the DNA helix, facilitating insertion of UvrB beta-hairpin between the DNA strands. Then UvrB probes one DNA strand for the presence of a lesion. If a lesion is found the UvrA subunits dissociate and the UvrB-DNA preincision complex is formed. This complex is subsequently bound by UvrC and the second UvrB is released. If no lesion is found, the DNA wraps around the other UvrB subunit that will check the other stand for damage. The protein is UvrABC system protein B of Shigella flexneri.